The primary structure comprises 339 residues: Dihydroorotate dehydrogenase (quinone) (339 aa).

Residues 62–66 (AGLDK) and Thr86 each bind FMN. A substrate-binding site is contributed by Lys66. A substrate-binding site is contributed by 111–115 (NRMGF). Residues Asn139 and Asn172 each contribute to the FMN site. Asn172 contributes to the substrate binding site. Ser175 serves as the catalytic Nucleophile. Asn177 serves as a coordination point for substrate. Residues Lys217 and Thr245 each coordinate FMN. 246 to 247 (NT) contributes to the substrate binding site. FMN-binding positions include Gly268, Gly297, and 318-319 (YS).

The protein belongs to the dihydroorotate dehydrogenase family. Type 2 subfamily. Monomer. FMN serves as cofactor.

Its subcellular location is the cell membrane. The catalysed reaction is (S)-dihydroorotate + a quinone = orotate + a quinol. It functions in the pathway pyrimidine metabolism; UMP biosynthesis via de novo pathway; orotate from (S)-dihydroorotate (quinone route): step 1/1. In terms of biological role, catalyzes the conversion of dihydroorotate to orotate with quinone as electron acceptor. The polypeptide is Dihydroorotate dehydrogenase (quinone) (Shewanella amazonensis (strain ATCC BAA-1098 / SB2B)).